Here is a 357-residue protein sequence, read N- to C-terminus: Glucose-6-phosphatase catalytic subunit 1 (357 aa).

The Lumenal portion of the chain corresponds to 1 to 28; sequence MEERMNVLHDFGIQSTRYLQVNYEDSQD. Residues 29–49 form a helical membrane-spanning segment; that stretch reads WFVLVSVIADLRNAFYVLFPI. Residues 50–60 are Cytoplasmic-facing; sequence WFHIQETVGIN. A helical membrane pass occupies residues 61-81; sequence LLWVAVVGDWFNLVFKWILFG. The Lumenal segment spans residues 82 to 117; that stretch reads QRPYWWVLDTDYYSNSSVPLIKQFPVTCETGPGSPS. R83 is a binding site for substrate. The N-linked (GlcNAc...) asparagine glycan is linked to N96. A helical membrane pass occupies residues 118 to 138; it reads GHAMGTAGVYYVMVTSTLAIF. Catalysis depends on H119, which acts as the Proton donor. At 139–147 the chain is on the cytoplasmic side; it reads RGKKKSTYG. A helical transmembrane segment spans residues 148–168; the sequence is FRCLNVVLWLGYWAVQLNVCL. The Lumenal portion of the chain corresponds to 169-170; the sequence is SR. Residue R170 participates in substrate binding. The chain crosses the membrane as a helical span at residues 171-191; it reads IYLAAHFPHQVVAGVLSGIAV. Catalysis depends on H176, which acts as the Nucleophile. At 192-211 the chain is on the cytoplasmic side; sequence AETFSHIRGIYNASLQRYCL. The chain crosses the membrane as a helical span at residues 212–232; sequence ITFFLFGFALGFYLLLKGLGV. Residues 233–254 lie on the Lumenal side of the membrane; sequence DLLWTLEKAKRWCERPEWVHLD. The chain crosses the membrane as a helical span at residues 255 to 275; it reads TTPFASLFKNLGTLLGLGLAL. Residues 276-291 lie on the Cytoplasmic side of the membrane; it reads NSSMYRKSCKGELRKS. A helical membrane pass occupies residues 292–312; the sequence is LPFRLACIVASLGLLHLFDSL. The Lumenal segment spans residues 313–320; sequence KPPSQIES. Residues 321 to 341 traverse the membrane as a helical segment; the sequence is IFYILSFCKSATVPFASVSLI. At 342 to 357 the chain is on the cytoplasmic side; the sequence is PYCLARLLGQTHKKSL. A Prevents secretion from ER motif is present at residues 354–357; sequence KKSL.

It belongs to the glucose-6-phosphatase family.

It localises to the endoplasmic reticulum membrane. The catalysed reaction is D-glucose 6-phosphate + H2O = D-glucose + phosphate. The protein operates within carbohydrate biosynthesis; gluconeogenesis. In terms of biological role, hydrolyzes glucose-6-phosphate to glucose in the endoplasmic reticulum. Forms with the glucose-6-phosphate transporter (SLC37A4/G6PT) the complex responsible for glucose production in the terminal step of glycogenolysis and gluconeogenesis. Hence, it is the key enzyme in homeostatic regulation of blood glucose levels. This chain is Glucose-6-phosphatase catalytic subunit 1 (G6pc1), found in Rattus norvegicus (Rat).